Here is a 211-residue protein sequence, read N- to C-terminus: MTIGVVGRKCGMTRIFTEEGVSIPVTVIEIEPNRVTQFKTEETDGYRAVQVTVGERRASRVTAAQAGHFAKANVAAGRGVWEFRLEEGEYQAGDLINAEIFAAGQLVDVTGQSKGKGFAGTIKRWNFRGQDNTHGNSVSHRVPGSIGQCQTPGRVFKGKKMSGHMGAERVTVQSLEVVRVDAERNLLLVKGAVPGATGGNLVVRPAAKARG.

Residue Gln150 is modified to N5-methylglutamine.

This sequence belongs to the universal ribosomal protein uL3 family. In terms of assembly, part of the 50S ribosomal subunit. Forms a cluster with proteins L14 and L19. Post-translationally, methylated by PrmB.

Functionally, one of the primary rRNA binding proteins, it binds directly near the 3'-end of the 23S rRNA, where it nucleates assembly of the 50S subunit. In Pseudomonas fluorescens (strain ATCC BAA-477 / NRRL B-23932 / Pf-5), this protein is Large ribosomal subunit protein uL3.